A 77-amino-acid chain; its full sequence is Conotoxin LiC42 (77 aa).

Residues 1–22 form the signal peptide; the sequence is MKLTCVLIIAVLFLTASQLITA. A propeptide spanning residues 23-47 is cleaved from the precursor; that stretch reads DYSRDKQEYGAERLRDAMGKFKGSR. 3 disulfides stabilise this stretch: C49–C62, C56–C67, and C61–C76.

It belongs to the conotoxin O1 superfamily. As to expression, expressed by the venom duct.

The protein resides in the secreted. This Conus lividus (Livid cone) protein is Conotoxin LiC42.